The primary structure comprises 94 residues: Cell division topological specificity factor (94 aa).

Belongs to the MinE family.

Functionally, prevents the cell division inhibition by proteins MinC and MinD at internal division sites while permitting inhibition at polar sites. This ensures cell division at the proper site by restricting the formation of a division septum at the midpoint of the long axis of the cell. This is Cell division topological specificity factor from Clostridioides difficile (strain 630) (Peptoclostridium difficile).